The following is a 572-amino-acid chain: Myb-like protein Y (572 aa).

Over residues 196–211 (QSQSQLPTATNNNNKQ) the composition is skewed to polar residues. Residues 196-283 (QSQSQLPTAT…NNNNNNNNNE (88 aa)) are disordered. 2 stretches are compositionally biased toward low complexity: residues 222–237 (TATA…TTTT) and 260–281 (NDNN…NNNN). Positions 311–360 (PWTVEDQKKLEDALTKYPPSRFSSVSRWQMVSKELGISPKAVALRYNQML) constitute a Myb-like domain. Residues 367 to 456 (KPSLQQQQQQ…TTVTPNMTTP (90 aa)) form a disordered region. Composition is skewed to low complexity over residues 371-392 (QQQQ…TTTT) and 414-425 (SSFSSPSSSSKE). Over residues 426 to 435 (SPNKKEKTTH) the composition is skewed to basic and acidic residues. Residues 436–455 (DTTTTTNTATTTTVTPNMTT) show a composition bias toward low complexity.

In Dictyostelium discoideum (Social amoeba), this protein is Myb-like protein Y (mybY).